A 438-amino-acid polypeptide reads, in one-letter code: Thymidine phosphorylase (438 aa).

This sequence belongs to the thymidine/pyrimidine-nucleoside phosphorylase family. As to quaternary structure, homodimer.

The enzyme catalyses thymidine + phosphate = 2-deoxy-alpha-D-ribose 1-phosphate + thymine. It functions in the pathway pyrimidine metabolism; dTMP biosynthesis via salvage pathway; dTMP from thymine: step 1/2. Its function is as follows. The enzymes which catalyze the reversible phosphorolysis of pyrimidine nucleosides are involved in the degradation of these compounds and in their utilization as carbon and energy sources, or in the rescue of pyrimidine bases for nucleotide synthesis. This chain is Thymidine phosphorylase, found in Burkholderia lata (strain ATCC 17760 / DSM 23089 / LMG 22485 / NCIMB 9086 / R18194 / 383).